Consider the following 130-residue polypeptide: Metastasis-suppressor KiSS-1 (130 aa).

Residues 1-19 form the signal peptide; the sequence is MISLASWQLLLLLCVASFG. Positions 52-91 are disordered; that stretch reads RYAESKPGAAGLRARRTSPCPPVENPTGHQRPPCATRSRL. An intrachain disulfide couples Cys71 to Cys85. Tyr110 carries the post-translational modification Phosphotyrosine. The segment at 110-119 is essential for receptor binding and receptor activation; sequence YNWNSFGLRY. Tyr119 is modified (tyrosine amide).

Belongs to the KISS1 family. As to expression, highest levels in the cecum and colon. Moderate levels present in the liver, spleen, kidney, ovary, uterus and small intestine. Low levels in the stomach, pancreas and placenta. Expressed only moderately in the placenta. Persistent expression is detected in hypothalamus throughout postnatal development, with maximum expression levels at puberty in both male and female. Hypothalamic expression is sensitive to neonatal imprinting by estrogen. Expression is higher in the hypothalamus than in the brainstem and spinal cord. In the brain, metastin-like immunoreactivity is found mainly in three groups of cells: dorsomedial hypothalamic nucleus, nucleus of the solitary tract, and caudal ventrolateral medulla.

It is found in the secreted. In terms of biological role, metastasis suppressor protein. May regulate events downstream of cell-matrix adhesion, perhaps involving cytoskeletal reorganization. Generates a C-terminally amidated peptide, metastin which functions as the endogenous ligand of the G-protein coupled receptor GPR54. The receptor is also essential for normal gonadotropin-released hormone physiology and for puberty. The hypothalamic KiSS1/GPR54 system is a pivotal factor in central regulation of the gonadotropic axis at puberty and in adulthood. Intracerebroventricular administration induces an increase in serum LH and FSH levels in prepubertal male and female as well as in adult animals. In Rattus norvegicus (Rat), this protein is Metastasis-suppressor KiSS-1 (Kiss1).